A 281-amino-acid polypeptide reads, in one-letter code: 16S rRNA (guanine(1405)-N(7))-methyltransferase (281 aa).

S-adenosyl-L-methionine is bound by residues Tyr-60, 105–107 (HTS), Arg-111, Gly-136, Asp-160, 186–187 (QG), Phe-203, and Gln-212.

The protein belongs to the methyltransferase superfamily. Aminoglycoside resistance family.

The enzyme catalyses guanosine(1405) in 16S rRNA + S-adenosyl-L-methionine = N(7)-methylguanosine(1405) in 16S rRNA + S-adenosyl-L-homocysteine. Functionally, specifically methylates the N(7) position of guanine 1405 in 16S rRNA. Confers resistance to various aminoglycosides, including gentamicin and kanamycin. The polypeptide is 16S rRNA (guanine(1405)-N(7))-methyltransferase (rmtC) (Proteus mirabilis).